The chain runs to 615 residues: Elongation factor 4 (615 aa).

A tr-type G domain is found at Ala14–Val196. GTP-binding positions include Asp26–Thr31 and Asn143–Asp146.

It belongs to the TRAFAC class translation factor GTPase superfamily. Classic translation factor GTPase family. LepA subfamily.

The protein localises to the cell membrane. It carries out the reaction GTP + H2O = GDP + phosphate + H(+). Its function is as follows. Required for accurate and efficient protein synthesis under certain stress conditions. May act as a fidelity factor of the translation reaction, by catalyzing a one-codon backward translocation of tRNAs on improperly translocated ribosomes. Back-translocation proceeds from a post-translocation (POST) complex to a pre-translocation (PRE) complex, thus giving elongation factor G a second chance to translocate the tRNAs correctly. Binds to ribosomes in a GTP-dependent manner. This Frankia alni (strain DSM 45986 / CECT 9034 / ACN14a) protein is Elongation factor 4.